The following is a 257-amino-acid chain: 4-chloro-allylglycine synthase (257 aa).

Residues E112, H119, E173, H203, E207, and H210 each coordinate Fe cation.

Fe(2+) serves as cofactor.

The catalysed reaction is 4-chloro-L-lysine + AH2 + O2 = L-2-amino-4-chloropent-4-enoate + formaldehyde + A + NH4(+) + H2O. Its pathway is amino-acid metabolism. The protein operates within antibiotic biosynthesis. Functionally, involved in the biosynthesis of terminal alkyne-containing amino acids such as L-propargylglycine (Pra) and L-beta-ethynylserine, that are produced as antibiotics by S.cattleya. Catalyzes an oxidative C-C bond cleavage in 4-chloro-L-lysine to form 4-chloro-allyl-L-glycine (also named L-2-amino-4-chloropent-4-enoate), with release of formaldehyde and ammonia. Is also able to react with L-lysine directly to produce allylglycine in vitro. This is 4-chloro-allylglycine synthase from Streptantibioticus cattleyicolor (strain ATCC 35852 / DSM 46488 / JCM 4925 / NBRC 14057 / NRRL 8057) (Streptomyces cattleya).